A 532-amino-acid polypeptide reads, in one-letter code: Germ cell nuclear acidic-1 protein (532 aa).

Residues 1–10 (MPTPFRDLHN) show a composition bias toward basic and acidic residues. Disordered stretches follow at residues 1–50 (MPTP…EPIS), 84–181 (REAP…GNFE), and 213–253 (YISE…DRKQ). Residues 14-32 (ASASSYETAWSSSFSSRRS) are compositionally biased toward low complexity. Composition is skewed to basic and acidic residues over residues 39 to 48 (SNLKEIKDEP), 94 to 107 (LLQKIEKEDERDML), and 124 to 133 (KPKEVKKALK). Residues 213 to 235 (YISEESSEEESEEEEEDVDDEEY) show a composition bias toward acidic residues. Residues 236–251 (RESSPEVEAKISYSDR) show a composition bias toward basic and acidic residues. Positions 308-398 (RRIFSAIPSE…GARCSSVFKS (91 aa)) constitute a SprT-like domain. Residues 468 to 489 (AKPVGPILSNSSKPSPPAPRRI) form a disordered region.

This sequence belongs to the serine-aspartate repeat-containing protein (SDr) family. As to quaternary structure, interacts with top-2; this interaction allows the resolution of topoisomerase II (top-2) DNA-protein cross-links. In terms of tissue distribution, mainly expressed in germ cells and early embryonic, proliferating cells.

The protein localises to the chromosome. Its function is as follows. May play a role in DNA-protein cross-links (DPCs) clearance through a SUMO-dependent recruitment to sites of DPCs, ensuring the genomic stability by protecting germ cells and early embryos from various sources of damage. May resolve the topoisomerase II (top-2) DPCs. Limits replication stress and DNA double-strand breaks. The chain is Germ cell nuclear acidic-1 protein from Caenorhabditis elegans.